The following is a 306-amino-acid chain: Homoserine kinase (306 aa).

84–94 (PAGLGLGSSGA) contributes to the ATP binding site.

This sequence belongs to the GHMP kinase family. Homoserine kinase subfamily.

The protein localises to the cytoplasm. The enzyme catalyses L-homoserine + ATP = O-phospho-L-homoserine + ADP + H(+). Its pathway is amino-acid biosynthesis; L-threonine biosynthesis; L-threonine from L-aspartate: step 4/5. In terms of biological role, catalyzes the ATP-dependent phosphorylation of L-homoserine to L-homoserine phosphate. This is Homoserine kinase from Sulfurisphaera tokodaii (strain DSM 16993 / JCM 10545 / NBRC 100140 / 7) (Sulfolobus tokodaii).